Reading from the N-terminus, the 561-residue chain is Carboxylesterase 1F (561 aa).

The first 17 residues, 1–17 (MFLSTLFLVSLATCVIC), serve as a signal peptide directing secretion. Cys87 and Cys116 are joined by a disulfide. The Acyl-ester intermediate role is filled by Ser221. Cys273 and Cys284 are disulfide-bonded. Catalysis depends on charge relay system residues Glu353 and His466. Residues 558–561 (HNEL) carry the Prevents secretion from ER motif.

The protein belongs to the type-B carboxylesterase/lipase family. In terms of tissue distribution, expressed in liver, white and brown adipose tissue, kidney, intestine, adrenal, heart and ovary. Not detected in muscle, lung, testis, brain and spleen.

The protein resides in the lipid droplet. It localises to the cytoplasm. It is found in the cytosol. Its subcellular location is the endoplasmic reticulum. The protein localises to the microsome. It catalyses the reaction a carboxylic ester + H2O = an alcohol + a carboxylate + H(+). The catalysed reaction is all-trans-retinyl hexadecanoate + H2O = all-trans-retinol + hexadecanoate + H(+). Functionally, involved in the detoxification of xenobiotics and in the activation of ester and amide prodrugs. Hydrolyzes retinyl esters. Hydrolyzes p-nitrophenyl butyrate (PNPB), triacylglycerol and monoacylglycerol. Shows higher activity against PNPB, a short-chain fatty acid ester, than against triolein, a long-chain fatty acid ester. Shows no detectable activity against diacylglycerol, cholesterol ester or phospholipids. May play a role in adipocyte lipolysis. The polypeptide is Carboxylesterase 1F (Mus musculus (Mouse)).